We begin with the raw amino-acid sequence, 724 residues long: Eukaryotic elongation factor 2 kinase (724 aa).

Alanine 2 is modified (N-acetylalanine). The segment at 11–35 is disordered; that stretch reads EGVDGGGSSGAGRHGDSDTDSDDDE. The segment covering 13–22 has biased composition (gly residues); sequence VDGGGSSGAG. Serine 18, serine 27, serine 70, and serine 73 each carry phosphoserine. At serine 77 the chain carries Phosphoserine; by autocatalysis and TRPM7. A calmodulin-binding region spans residues 80 to 93; the sequence is FKEAWKHAIEKAKH. The 211-residue stretch at 115–325 folds into the Alpha-type protein kinase domain; it reads RYNAVTGEWL…ICQSMGLAPF (211 aa). The residue at position 242 (serine 242) is a Phosphoserine. ATP is bound at residue 295 to 301; it reads GDGNLGV. Position 347 is a phosphothreonine (threonine 347). Position 352 is a phosphothreonine; by autocatalysis (threonine 352). The tract at residues 353–476 is disordered; sequence EEKCGSPRIR…PESDEDSLGS (124 aa). Serine 358 carries the post-translational modification Phosphoserine; by MAPK13 and CDK1. Residues 364–376 show a composition bias toward low complexity; it reads LSGSRPPLLLRLS. Serine 365 and serine 391 each carry phosphoserine. Polar residues predominate over residues 385–403; it reads SDVTFDSLPSSPSSATPHS. Serine 397 carries the phosphoserine; by AMPK modification. Basic and acidic residues-rich tracts occupy residues 421 to 435 and 444 to 468; these read GPRD…RDSE and SEKR…RRPE. Residues serine 434, serine 444, serine 469, serine 473, and serine 476 each carry the phosphoserine modification. A Phosphoserine; by PKA modification is found at serine 499.

This sequence belongs to the protein kinase superfamily. Alpha-type protein kinase family. As to quaternary structure, monomer or homodimer. Interacts with Calmodulin/CALM1; this interaction is strictly required for phosphorylation activity. The N-terminus is blocked. Post-translationally, autophosphorylated at multiple residues, Thr-347 being the major site. Phosphorylated by AMP-activated protein kinase AMPK at Ser-397 leading to EEF2K activation and protein synthesis inhibition. Phosphorylated by TRPM7 at Ser-77 resulting in improved protein stability, higher EE2F phosphorylated and subsequently reduced rate of protein synthesis. Phosphorylation by other kinases such as CDK1 and MAPK13 at Ser-358 or RPS6KA1 and RPS6KB1 at Ser-365 instead decrease EEF2K activity and promote protein synthesis. Widely expressed, with high levels in reticulocytes and skeletal muscle.

The catalysed reaction is [translation elongation factor 2] + ATP = [translation elongation factor 2]-phosphate + ADP + H(+). Its activity is regulated as follows. Undergoes calcium/calmodulin-dependent intramolecular autophosphorylation, and this results in it becoming partially calcium/calmodulin-independent. Threonine kinase that regulates protein synthesis by controlling the rate of peptide chain elongation. Upon activation by a variety of upstream kinases including AMPK or TRPM7, phosphorylates the elongation factor EEF2 at a single site, renders it unable to bind ribosomes and thus inactive. In turn, the rate of protein synthesis is reduced. This Rattus norvegicus (Rat) protein is Eukaryotic elongation factor 2 kinase.